The following is a 283-amino-acid chain: 4-diphosphocytidyl-2-C-methyl-D-erythritol kinase (283 aa).

Residue K10 is part of the active site. 99–109 (PMGGGLGGGSS) lines the ATP pocket. D141 is a catalytic residue.

It belongs to the GHMP kinase family. IspE subfamily. In terms of assembly, homodimer.

It carries out the reaction 4-CDP-2-C-methyl-D-erythritol + ATP = 4-CDP-2-C-methyl-D-erythritol 2-phosphate + ADP + H(+). The protein operates within isoprenoid biosynthesis; isopentenyl diphosphate biosynthesis via DXP pathway; isopentenyl diphosphate from 1-deoxy-D-xylulose 5-phosphate: step 3/6. In terms of biological role, catalyzes the phosphorylation of the position 2 hydroxy group of 4-diphosphocytidyl-2C-methyl-D-erythritol. The sequence is that of 4-diphosphocytidyl-2-C-methyl-D-erythritol kinase from Salmonella arizonae (strain ATCC BAA-731 / CDC346-86 / RSK2980).